The sequence spans 141 residues: Nucleoside diphosphate kinase (141 aa).

ATP-binding residues include Lys-11, Phe-59, Arg-87, Thr-93, Arg-104, and Asn-114. His-117 acts as the Pros-phosphohistidine intermediate in catalysis.

It belongs to the NDK family. Homotetramer. Requires Mg(2+) as cofactor.

Its subcellular location is the cytoplasm. It catalyses the reaction a 2'-deoxyribonucleoside 5'-diphosphate + ATP = a 2'-deoxyribonucleoside 5'-triphosphate + ADP. The catalysed reaction is a ribonucleoside 5'-diphosphate + ATP = a ribonucleoside 5'-triphosphate + ADP. In terms of biological role, major role in the synthesis of nucleoside triphosphates other than ATP. The ATP gamma phosphate is transferred to the NDP beta phosphate via a ping-pong mechanism, using a phosphorylated active-site intermediate. The polypeptide is Nucleoside diphosphate kinase (Pseudomonas fluorescens (strain SBW25)).